The chain runs to 1032 residues: Connector enhancer of kinase suppressor of ras 2 (1032 aa).

Positions 11 to 76 (WSPSQVVDWM…LEAVDLLCAL (66 aa)) constitute an SAM domain. Phosphoserine is present on S12. A CRIC domain is found at 84–178 (NLKTLSHKLN…TIVQQDCTVY (95 aa)). Positions 215-297 (VIQLANIKPS…GVILTLKKRP (83 aa)) constitute a PDZ domain. The region spanning 302–515 (TSAPALLKNM…PAHYSLLPSL (214 aa)) is the DUF1170 domain. A compositionally biased stretch (low complexity) spans 324 to 340 (RSPTSSVATPSSTISTP). Residues 324–349 (RSPTSSVATPSSTISTPTKRDSSALQ) are disordered. Phosphoserine is present on residues S338 and S390. Disordered regions lie at residues 480 to 509 (EEYM…PAHY) and 538 to 558 (FQQS…ISGK). A compositionally biased stretch (basic residues) spans 545 to 558 (HKSKKKNKGAISGK). One can recognise a PH domain in the interval 570–669 (RGDCEGWLWK…WLNRINMLTA (100 aa)). The segment at 682–766 (DYWSESDKEE…PIRKTASQRR (85 aa)) is disordered. Y683 bears the Phosphotyrosine mark. Residues 683–693 (YWSESDKEEAD) are compositionally biased toward acidic residues. A phosphoserine mark is found at S685 and S687. Positions 701-714 (DSPPPPYDTYPRPP) are enriched in pro residues. A compositionally biased stretch (low complexity) spans 730–740 (LSSTETSQSQS). 2 positions are modified to phosphoserine: S756 and S767. The interval 864-900 (ACDPQDDIQPPEVEEEEEEEEEEAAGENVGEKNENRE) is disordered. Residues 874–917 (PEVEEEEEEEEEEAAGENVGEKNENREEKLGDSLQDLYRALEEA) adopt a coiled-coil conformation. The span at 875–888 (EVEEEEEEEEEEAA) shows a compositional bias: acidic residues. At S906 the chain carries Phosphoserine.

It belongs to the CNKSR family. As to quaternary structure, interacts with RAF1, RAB2L and RAL GTPase proteins. Phosphorylated on tyrosine.

The protein resides in the cytoplasm. The protein localises to the membrane. In terms of biological role, may function as an adapter protein or regulator of Ras signaling pathways. The polypeptide is Connector enhancer of kinase suppressor of ras 2 (Cnksr2) (Mus musculus (Mouse)).